We begin with the raw amino-acid sequence, 113 residues long: Putative pterin-4-alpha-carbinolamine dehydratase (113 aa).

The protein belongs to the pterin-4-alpha-carbinolamine dehydratase family.

It carries out the reaction (4aS,6R)-4a-hydroxy-L-erythro-5,6,7,8-tetrahydrobiopterin = (6R)-L-erythro-6,7-dihydrobiopterin + H2O. The sequence is that of Putative pterin-4-alpha-carbinolamine dehydratase from Nitrosococcus oceani (strain ATCC 19707 / BCRC 17464 / JCM 30415 / NCIMB 11848 / C-107).